Consider the following 441-residue polypeptide: Collagen alpha-1(XXVI) chain (441 aa).

A signal peptide spans 1–20; it reads MKLALLLPWACCCLCGSALA. The 77-residue stretch at 52-128 folds into the EMI domain; the sequence is RRHWCHHTVT…PGFTGSNCDE (77 aa). Cystine bridges form between C56-C118, C83-C89, and C117-C126. N-linked (GlcNAc...) asparagine glycosylation is present at N70. N132 is a glycosylation site (N-linked (GlcNAc...) asparagine). 2 disordered regions span residues 156–362 and 390–441; these read AERP…AEGE and PLAS…SSRK. 2 Collagen-like domains span residues 199-267 and 302-355; these read GPAG…PGPS and GVPG…EGEK. Composition is skewed to pro residues over residues 200 to 215, 231 to 243, 252 to 269, and 306 to 327; these read PAGP…PAGP, AGPP…PGPR, PGPP…PSPN, and PRGP…PPGT. A compositionally biased stretch (basic and acidic residues) spans 348-357; sequence VKGEEGEKAA.

As to quaternary structure, homotrimer or heterotrimer. Hydroxylated on proline residues.

It localises to the secreted. The protein resides in the extracellular space. Its subcellular location is the extracellular matrix. The protein is Collagen alpha-1(XXVI) chain (COL26A1) of Homo sapiens (Human).